Reading from the N-terminus, the 182-residue chain is pEARLI1-like lipid transfer protein 2 (182 aa).

The signal sequence occupies residues 1–25; it reads MASKNSASLALFFALNILFFTLTAG. Over residues 33–92 the composition is skewed to pro residues; that stretch reads SPKPRPLPNPKVPSPKVPTPSVPSPYVPTPSVPSPSVPTPSVPSPSVPSPNPTPVIPPRT. A disordered region spans residues 33 to 94; the sequence is SPKPRPLPNP…TPVIPPRTPG (62 aa). Repeat copies occupy residues 42-46, 47-51, 52-56, 62-66, 67-71, 72-76, and 77-81. The segment at 42 to 81 is 7 X 5 AA repeats of P-[KS]-V-P-[ST]; sequence PKVPSPKVPTPSVPSPYVPTPSVPSPSVPTPSVPSPSVPS.

This sequence belongs to the plant LTP family. PEARLI1 subfamily.

The protein localises to the secreted. It localises to the cell wall. Its function is as follows. Probable lipid transfer protein (LTP). May improve freezing survival. Seems to control the flowering process and lignin synthesis. Confers resistance to Botrytis cinerea. The chain is pEARLI1-like lipid transfer protein 2 from Arabidopsis thaliana (Mouse-ear cress).